A 438-amino-acid polypeptide reads, in one-letter code: Methyl-coenzyme M reductase subunit beta (438 aa).

A coenzyme M-binding site is contributed by Tyr367. Gly369 is a binding site for coenzyme B.

It belongs to the methyl-coenzyme M reductase beta subunit family. MCR is a hexamer of two alpha, two beta, and two gamma chains, forming a dimer of heterotrimers. Requires coenzyme F430 as cofactor.

It localises to the cytoplasm. It carries out the reaction coenzyme B + methyl-coenzyme M = methane + coenzyme M-coenzyme B heterodisulfide. The protein operates within one-carbon metabolism; methyl-coenzyme M reduction; methane from methyl-coenzyme M: step 1/1. Its function is as follows. Component of the methyl-coenzyme M reductase (MCR) I that catalyzes the reductive cleavage of methyl-coenzyme M (CoM-S-CH3 or 2-(methylthio)ethanesulfonate) using coenzyme B (CoB or 7-mercaptoheptanoylthreonine phosphate) as reductant which results in the production of methane and the mixed heterodisulfide of CoB and CoM (CoM-S-S-CoB). This is the final step in methanogenesis. This is Methyl-coenzyme M reductase subunit beta (mcrB) from Methanothermus fervidus.